The primary structure comprises 567 residues: Potassium-transporting ATPase potassium-binding subunit (567 aa).

Transmembrane regions (helical) follow at residues 5-25 (GWLQ…PLGG), 64-84 (TTYS…LYFL), 136-156 (GFTV…IALI), 179-199 (LYVL…LGVP), 254-274 (ISNL…TNVF), 285-305 (WAIL…TYWA), 328-350 (VRFG…CGAV), 375-395 (IVGG…IAIF), 421-441 (MLAV…SVVL), 459-481 (ILYA…SANT), 486-506 (ITLG…ALAI), and 529-549 (LFVG…FFPA).

Belongs to the KdpA family. As to quaternary structure, the system is composed of three essential subunits: KdpA, KdpB and KdpC.

The protein resides in the cell inner membrane. Its function is as follows. Part of the high-affinity ATP-driven potassium transport (or Kdp) system, which catalyzes the hydrolysis of ATP coupled with the electrogenic transport of potassium into the cytoplasm. This subunit binds the periplasmic potassium ions and delivers the ions to the membrane domain of KdpB through an intramembrane tunnel. The polypeptide is Potassium-transporting ATPase potassium-binding subunit (Rhizobium rhizogenes (strain K84 / ATCC BAA-868) (Agrobacterium radiobacter)).